Here is a 640-residue protein sequence, read N- to C-terminus: Ribonuclease J (640 aa).

Zn(2+) contacts are provided by histidine 75, histidine 77, aspartate 79, histidine 80, histidine 145, and aspartate 167. 368 to 372 (HVSGH) provides a ligand contact to substrate. Histidine 394 contributes to the Zn(2+) binding site. Residues 578-640 (TVSATSATPA…RKRSTTSVSS (63 aa)) form a disordered region. Residues 598 to 610 (PEPKVKAKPEKKV) are compositionally biased toward basic and acidic residues.

The protein belongs to the metallo-beta-lactamase superfamily. RNA-metabolizing metallo-beta-lactamase-like family. Bacterial RNase J subfamily. In terms of assembly, homodimer, may be a subunit of the RNA degradosome. Requires Zn(2+) as cofactor.

It localises to the cytoplasm. Its function is as follows. An RNase that has 5'-3' exonuclease and possibly endoonuclease activity. Involved in maturation of rRNA and in some organisms also mRNA maturation and/or decay. The sequence is that of Ribonuclease J from Synechocystis sp. (strain ATCC 27184 / PCC 6803 / Kazusa).